The following is a 406-amino-acid chain: S-adenosylmethionine synthase (406 aa).

His-17 serves as a coordination point for ATP. Residue Asp-19 coordinates Mg(2+). Glu-45 is a K(+) binding site. L-methionine is bound by residues Glu-58 and Gln-101. The interval Gln-101–Arg-111 is flexible loop. ATP contacts are provided by residues Asp-178–Lys-180, Asp-258, Arg-264–Lys-265, Ala-281, and Lys-285. Position 258 (Asp-258) interacts with L-methionine. Residue Lys-289 coordinates L-methionine.

Belongs to the AdoMet synthase family. As to quaternary structure, homotetramer; dimer of dimers. It depends on Mg(2+) as a cofactor. K(+) is required as a cofactor.

It is found in the cytoplasm. The enzyme catalyses L-methionine + ATP + H2O = S-adenosyl-L-methionine + phosphate + diphosphate. It functions in the pathway amino-acid biosynthesis; S-adenosyl-L-methionine biosynthesis; S-adenosyl-L-methionine from L-methionine: step 1/1. Its function is as follows. Catalyzes the formation of S-adenosylmethionine (AdoMet) from methionine and ATP. The overall synthetic reaction is composed of two sequential steps, AdoMet formation and the subsequent tripolyphosphate hydrolysis which occurs prior to release of AdoMet from the enzyme. The chain is S-adenosylmethionine synthase from Bifidobacterium longum (strain NCC 2705).